The primary structure comprises 265 residues: Hydroxyethylthiazole kinase (265 aa).

Residue M55 participates in substrate binding. R130 and S176 together coordinate ATP. G203 contacts substrate.

This sequence belongs to the Thz kinase family. Mg(2+) serves as cofactor.

It carries out the reaction 5-(2-hydroxyethyl)-4-methylthiazole + ATP = 4-methyl-5-(2-phosphooxyethyl)-thiazole + ADP + H(+). It functions in the pathway cofactor biosynthesis; thiamine diphosphate biosynthesis; 4-methyl-5-(2-phosphoethyl)-thiazole from 5-(2-hydroxyethyl)-4-methylthiazole: step 1/1. Catalyzes the phosphorylation of the hydroxyl group of 4-methyl-5-beta-hydroxyethylthiazole (THZ). This Leptospira interrogans serogroup Icterohaemorrhagiae serovar copenhageni (strain Fiocruz L1-130) protein is Hydroxyethylthiazole kinase.